A 543-amino-acid chain; its full sequence is Zinc finger protein egl-43 (543 aa).

A positive regulatory (PR) domain region spans residues Ser-2–Glu-62. C2H2-type zinc fingers lie at residues His-159–His-181 and Phe-187–His-209. The C2H2-type 3; atypical zinc finger occupies Trp-213 to Pro-233. Residues Pro-299–His-380 are disordered. Positions Gly-306–Glu-317 are enriched in polar residues. Positions Thr-335–Ile-348 are enriched in basic and acidic residues. 2 C2H2-type zinc fingers span residues Tyr-444–His-466 and Tyr-472–His-495. Residues Asn-496–Val-543 form a disordered region. Positions Leu-513–Leu-533 are enriched in low complexity.

The protein resides in the nucleus. In terms of biological role, probable transcription factor, required for migration of the hermaphrodite-specific motor neurons (HSNs) from the tail to the gonad primordium during HSN cell differentiation. Required for phasmid neuron development. Required to specify the pi-cell fate of ventral uterine precursor cell (VU) cells. Functionally, probable transcription factor, involved in lin-12 (Notch)-dependent anchor cell (AC) and ventral uterine (VU) precursor cell fate specification and in AC invasion. Prevents AC proliferation after AC cell specification by repressing lin-12 expression. May form a positive feedback loop, together with the transcription factor fos-1, that maintains mutual high levels of expression and so activates AC invasion. Dispensable for anchor cell (AC) invasion and for preventing AC proliferation. The protein is Zinc finger protein egl-43 of Caenorhabditis elegans.